Reading from the N-terminus, the 427-residue chain is Adenylosuccinate synthetase (427 aa).

GTP-binding positions include 12 to 18 and 40 to 42; these read GDEGKGK and GHT. Asp13 functions as the Proton acceptor in the catalytic mechanism. Mg(2+)-binding residues include Asp13 and Gly40. Residues 13-16, 38-41, Thr127, Arg141, Gln222, Thr237, and Arg301 each bind IMP; these read DEGK and NAGH. The active-site Proton donor is the His41. Residue 297–303 coordinates substrate; that stretch reads VVTKRPR. GTP contacts are provided by residues Arg303, 329 to 331, and 411 to 413; these read SLD and AVG.

It belongs to the adenylosuccinate synthetase family. In terms of assembly, homodimer. Mg(2+) serves as cofactor.

It is found in the cytoplasm. The catalysed reaction is IMP + L-aspartate + GTP = N(6)-(1,2-dicarboxyethyl)-AMP + GDP + phosphate + 2 H(+). Its pathway is purine metabolism; AMP biosynthesis via de novo pathway; AMP from IMP: step 1/2. Its function is as follows. Plays an important role in the de novo pathway of purine nucleotide biosynthesis. Catalyzes the first committed step in the biosynthesis of AMP from IMP. The protein is Adenylosuccinate synthetase of Leuconostoc mesenteroides subsp. mesenteroides (strain ATCC 8293 / DSM 20343 / BCRC 11652 / CCM 1803 / JCM 6124 / NCDO 523 / NBRC 100496 / NCIMB 8023 / NCTC 12954 / NRRL B-1118 / 37Y).